A 392-amino-acid polypeptide reads, in one-letter code: Cell division protein DivIB (392 aa).

The tract at residues 1–88 (MSEKDNNLTP…TQSSEAPIEN (88 aa)) is disordered. Residues 1-131 (MSEKDNNLTP…KGSAPLLKKM (131 aa)) are Cytoplasmic-facing. The span at 14–32 (KHLEYQKRKAEEAKKEKKA) shows a compositional bias: basic and acidic residues. The span at 58-76 (TRDEAESAELLEEGFETNN) shows a compositional bias: acidic residues. The helical transmembrane segment at 132–152 (WPALAVVVLVFVGSLYLISPL) threads the bilayer. Positions 153–224 (SKISTFSVSG…NRFEAIVKEH (72 aa)) constitute a POTRA domain. At 153-392 (SKISTFSVSG…TAQSTTTSSN (240 aa)) the chain is on the extracellular side. Residues 368–392 (ISAQNAKKTDASSENTAQSTTTSSN) form a disordered region.

Belongs to the FtsQ/DivIB family. DivIB subfamily.

The protein resides in the cell membrane. Functionally, cell division protein that may be involved in stabilizing or promoting the assembly of the division complex. This Lactococcus lactis subsp. lactis (strain KF147) protein is Cell division protein DivIB.